A 1015-amino-acid polypeptide reads, in one-letter code: Protein HIRA (1015 aa).

2 WD repeats span residues 11–53 (HNGK…QEDD) and 68–107 (NHLA…GPST). Phosphoserine is present on Ser-111. 5 WD repeats span residues 129–168 (SHSG…EILA), 172–211 (GHSG…LETS), 220–263 (GGTT…TNMD), 266–322 (GHRK…PLVV), and 326–367 (LFDK…DPLS). The tract at residues 408–431 (QQQQQLDQKNATTRETSSASSVTG) is disordered. Polar residues predominate over residues 413–431 (LDQKNATTRETSSASSVTG). Residues 421–479 (RETSSASSVTGVVNGESLEDIRKNLLKKQVETRTADGRRRITPLCIAQLDTGDFSTAFF) form an interaction with ASF1A region. The interval 421–727 (RETSSASSVT…RLKCNREGKE (307 aa)) is interaction with CCNA1. Positions 439-475 (EDIRKNLLKKQVETRTADGRRRITPLCIAQLDTGDFS) are required for repression of histone gene transcription. 2 stretches are compositionally biased toward low complexity: residues 494-507 (SSPS…LDSS) and 540-556 (ATST…TTPS). Residues 494–558 (SSPSGQQLLP…PSVLTTPSKI (65 aa)) form a disordered region. Ser-548 is subject to Phosphoserine. The residue at position 554 (Thr-554) is a Phosphothreonine. Ser-556 carries the phosphoserine modification. Thr-575 bears the Phosphothreonine mark. A phosphoserine mark is found at Ser-583, Ser-608, Ser-609, Ser-610, Ser-612, Ser-659, and Ser-673. Interaction with PAX3 regions lie at residues 593–737 (KEQN…SRVL) and 738–826 (TAAG…SQIL). Residues 594-824 (EQNLVKELRS…LSGSDMTVSQ (231 aa)) form an interaction with histone H2B region. The span at 603-617 (SRELESSSDSDEKVH) shows a compositional bias: basic and acidic residues. A disordered region spans residues 603 to 623 (SRELESSSDSDEKVHLAKPSS). Residues 736–1015 (VLTAAGSCDV…QEQLDILRDK (280 aa)) are interaction with histone H4.

The protein belongs to the WD repeat HIR1 family. Interacts with CCNA1, HIRIP3 and NFU1/HIRIP5. Part of a complex which includes ASF1A, CABIN1, histone H3.3, histone H4 and UBN1. Interacts with histone H2B, histone H3-3B, PAX3 and PAX7. Sumoylated. In terms of processing, phosphorylated by CDK2/CCNA1 and CDK2/CCNE1 on Thr-554 in vitro. Also phosphorylated on Thr-554 in vivo. As to expression, expressed in cerebrum, cerebellum, heart, kidney, liver, lung and spleen.

It localises to the nucleus. The protein resides in the PML body. In terms of biological role, required for the periodic repression of histone gene transcription during the cell cycle. Cooperates with ASF1A to promote replication-independent chromatin assembly. Required for the formation of senescence-associated heterochromatin foci (SAHF) and efficient senescence-associated cell cycle exit. This is Protein HIRA (Hira) from Mus musculus (Mouse).